The following is a 482-amino-acid chain: MKFATSIVAAIATTGAAFTVIPQKLSHPSQLNALNTMGSISSITAESPKEVLSRVQDAGLTLTNPNDLYWMVDFLKEKYYDNGDYYYPIKTVCDGESIDVKFYCPFEPSLSPHYLELYGSRDERASIYETTMKKYNRINSEKTSAICTPYSSYGDTQIVAYFYSMMYYINDQTAHLKLPESEIESELIDILNDDILIYLNEFMSIFEPEDAQDLERIWDFLDFYQPYFSKVDGKIVLDEKYLVRTPSQMPLIKTICEYVSEQFAPSKNITQVIWEVVRYIKGVKDEIHIRGDKSFTLSLQEYDDFRDKVTASPMAHAVSDLTHERFSYEAYTNPAFMELENRCSEIITYFNDVCTSDRERLDEDPFNSVFILMDLDPSLNFAKSCDVVVEHAYNKMQAFLKLKEEILESASDEEERLALARMIKTREDSLIGYVLHEVCCVEDGYARDHKPLMKAFLEEEITKSLAEKVKFNPVESESVRLN.

Positions 351, 355, 359, and 366 each coordinate Mg(2+).

The protein belongs to the terpene synthase family. Mg(2+) serves as cofactor.

It carries out the reaction (2E)-geranyl diphosphate + L-glutamate = N-geranyl-L-glutamate + diphosphate. It functions in the pathway secondary metabolite biosynthesis. Functionally, magnesium-dependent glutamate N-prenyltransferase: part of the gene cluster that mediates the biosynthesis of domoic acid (DA) and derivatives, natural products with neurochemical activity acting as ionotropic glutamate receptor (iGluR) agonists, thus being neurotoxins causing amnesic shellfish poisoning (ASP). Catalyzes the conversion of L-glutamic acid (L-Glu) to N-geranyl-L-glutamic acid (NGG) in the presence of geranyl diphosphate (GPP). Also able to catalyze the formation of farnesyl-L-glutamate from farnesyl diphosphate (FPP). Cannot use dimethylallyl diphosphate (DMAPP) as substrate. This is Magnesium-dependent glutamate N-prenyltransferase from Pseudo-nitzschia multiseries (Marine planktonic diatom).